The primary structure comprises 414 residues: Putative competence-damage inducible protein (414 aa).

This sequence belongs to the CinA family.

This is Putative competence-damage inducible protein from Listeria monocytogenes serotype 4a (strain HCC23).